The sequence spans 200 residues: MPIGTPSVPYRLPGSQMERWVDIYTRLGVERILFLGSEVNDGIANSLVAQMLYLDSEDSSKPIYLYINSPGGSVTAGLAIYDTIQYVKSEVVTICVGLAASMGAFLLAAGTKGKRVALPHSRIMIHQPLGGTSRRQASDIEIEAREILRMKEMLNRSLSDMSGQSFDKIEKDTDRDYFLSAEEAKDYGLIDRVISHPNEA.

The Nucleophile role is filled by S101. H126 is an active-site residue.

Belongs to the peptidase S14 family. Fourteen ClpP subunits assemble into 2 heptameric rings which stack back to back to give a disk-like structure with a central cavity, resembling the structure of eukaryotic proteasomes.

Its subcellular location is the cytoplasm. The enzyme catalyses Hydrolysis of proteins to small peptides in the presence of ATP and magnesium. alpha-casein is the usual test substrate. In the absence of ATP, only oligopeptides shorter than five residues are hydrolyzed (such as succinyl-Leu-Tyr-|-NHMec, and Leu-Tyr-Leu-|-Tyr-Trp, in which cleavage of the -Tyr-|-Leu- and -Tyr-|-Trp bonds also occurs).. Its function is as follows. Cleaves peptides in various proteins in a process that requires ATP hydrolysis. Has a chymotrypsin-like activity. Plays a major role in the degradation of misfolded proteins. The chain is ATP-dependent Clp protease proteolytic subunit 3 from Parasynechococcus marenigrum (strain WH8102).